The primary structure comprises 568 residues: Probable inactive 1-aminocyclopropane-1-carboxylate synthase-like protein 2 (568 aa).

The interval 1 to 21 (MSHRSDTLPVPSGQRRGRVPR) is disordered. Position 395 is an N6-(pyridoxal phosphate)lysine (K395).

This sequence belongs to the class-I pyridoxal-phosphate-dependent aminotransferase family.

This is Probable inactive 1-aminocyclopropane-1-carboxylate synthase-like protein 2 (ACCSL) from Homo sapiens (Human).